Reading from the N-terminus, the 185-residue chain is CASP-like protein SELMODRAFT_413556 (185 aa).

At 1-89 the chain is on the cytoplasmic side; the sequence is MATLPLSLIF…AVTVLFYLAK (89 aa). The chain crosses the membrane as a helical span at residues 90 to 110; sequence LVFGILGLALSIIWLLHIIVF. At 111 to 131 the chain is on the extracellular side; it reads MLVNPPAFPFLNQVFIQLDSA. Residues 132–152 traverse the membrane as a helical segment; the sequence is WGLLGTTAFAIFCYYLIMSVI. Residues 153–163 lie on the Cytoplasmic side of the membrane; that stretch reads SGEMHSIHPMK. Residues 164-184 traverse the membrane as a helical segment; that stretch reads YQGTLMNSFLFNVAIILLCST. R185 is a topological domain (extracellular).

The protein belongs to the Casparian strip membrane proteins (CASP) family. As to quaternary structure, homodimer and heterodimers.

It localises to the cell membrane. The protein is CASP-like protein SELMODRAFT_413556 of Selaginella moellendorffii (Spikemoss).